A 48-amino-acid chain; its full sequence is Small, acid-soluble spore protein O (48 aa).

The tract at residues 1-23 is disordered; the sequence is MTKRKANHVINGMNAAKSQGNGA.

Belongs to the SspO family.

It localises to the spore core. This chain is Small, acid-soluble spore protein O, found in Bacillus pumilus (strain SAFR-032).